The following is a 342-amino-acid chain: Ferredoxin--NADP reductase (342 aa).

Residues C17, D36, Q44, Y49, I89, F124, D289, and T330 each coordinate FAD.

This sequence belongs to the ferredoxin--NADP reductase type 2 family. Homodimer. FAD is required as a cofactor.

The enzyme catalyses 2 reduced [2Fe-2S]-[ferredoxin] + NADP(+) + H(+) = 2 oxidized [2Fe-2S]-[ferredoxin] + NADPH. The polypeptide is Ferredoxin--NADP reductase (Rhodopseudomonas palustris (strain BisA53)).